Reading from the N-terminus, the 118-residue chain is Small ribosomal subunit protein uS13 (118 aa).

It belongs to the universal ribosomal protein uS13 family. In terms of assembly, part of the 30S ribosomal subunit. Forms a loose heterodimer with protein S19. Forms two bridges to the 50S subunit in the 70S ribosome.

In terms of biological role, located at the top of the head of the 30S subunit, it contacts several helices of the 16S rRNA. In the 70S ribosome it contacts the 23S rRNA (bridge B1a) and protein L5 of the 50S subunit (bridge B1b), connecting the 2 subunits; these bridges are implicated in subunit movement. Contacts the tRNAs in the A and P-sites. The sequence is that of Small ribosomal subunit protein uS13 from Carsonella ruddii (strain PV).